The primary structure comprises 350 residues: Protein-glutamate methylesterase/protein-glutamine glutaminase (350 aa).

The Response regulatory domain occupies 5 to 122; it reads KVLCVDDSAL…RDGLIEYSEV (118 aa). Residue aspartate 56 is modified to 4-aspartylphosphate. One can recognise a CheB-type methylesterase domain in the interval 152–346; the sequence is PFASSEKLVI…ERILTRLGDR (195 aa). Residues serine 165, histidine 191, and aspartate 288 contribute to the active site.

The protein belongs to the CheB family. Post-translationally, phosphorylated by CheA. Phosphorylation of the N-terminal regulatory domain activates the methylesterase activity.

It is found in the cytoplasm. The catalysed reaction is [protein]-L-glutamate 5-O-methyl ester + H2O = L-glutamyl-[protein] + methanol + H(+). It carries out the reaction L-glutaminyl-[protein] + H2O = L-glutamyl-[protein] + NH4(+). In terms of biological role, involved in chemotaxis. Part of a chemotaxis signal transduction system that modulates chemotaxis in response to various stimuli. Catalyzes the demethylation of specific methylglutamate residues introduced into the chemoreceptors (methyl-accepting chemotaxis proteins or MCP) by CheR. Also mediates the irreversible deamidation of specific glutamine residues to glutamic acid. In Bordetella bronchiseptica (strain ATCC BAA-588 / NCTC 13252 / RB50) (Alcaligenes bronchisepticus), this protein is Protein-glutamate methylesterase/protein-glutamine glutaminase.